The sequence spans 359 residues: DNA polymerase IV (359 aa).

Residues 4-184 form the UmuC domain; sequence IVHVDMDAFY…LPVNRIPGVG (181 aa). Residues Asp8 and Asp102 each coordinate Mg(2+). Residue Glu103 is part of the active site.

It belongs to the DNA polymerase type-Y family. Monomer. Mg(2+) serves as cofactor.

The protein resides in the cytoplasm. The catalysed reaction is DNA(n) + a 2'-deoxyribonucleoside 5'-triphosphate = DNA(n+1) + diphosphate. Poorly processive, error-prone DNA polymerase involved in untargeted mutagenesis. Copies undamaged DNA at stalled replication forks, which arise in vivo from mismatched or misaligned primer ends. These misaligned primers can be extended by PolIV. Exhibits no 3'-5' exonuclease (proofreading) activity. May be involved in translesional synthesis, in conjunction with the beta clamp from PolIII. The protein is DNA polymerase IV of Xanthomonas campestris pv. campestris (strain 8004).